Consider the following 386-residue polypeptide: DNA replication and repair protein RecF (386 aa).

Position 30 to 37 (30 to 37) interacts with ATP; the sequence is GANAQGKT.

This sequence belongs to the RecF family.

It is found in the cytoplasm. Its function is as follows. The RecF protein is involved in DNA metabolism; it is required for DNA replication and normal SOS inducibility. RecF binds preferentially to single-stranded, linear DNA. It also seems to bind ATP. In Natranaerobius thermophilus (strain ATCC BAA-1301 / DSM 18059 / JW/NM-WN-LF), this protein is DNA replication and repair protein RecF.